The chain runs to 168 residues: Crossover junction endodeoxyribonuclease RuvC (168 aa).

Active-site residues include Asp9, Glu69, and Asp141. Residues Asp9, Glu69, and Asp141 each coordinate Mg(2+).

The protein belongs to the RuvC family. In terms of assembly, homodimer which binds Holliday junction (HJ) DNA. The HJ becomes 2-fold symmetrical on binding to RuvC with unstacked arms; it has a different conformation from HJ DNA in complex with RuvA. In the full resolvosome a probable DNA-RuvA(4)-RuvB(12)-RuvC(2) complex forms which resolves the HJ. Mg(2+) is required as a cofactor.

It is found in the cytoplasm. It catalyses the reaction Endonucleolytic cleavage at a junction such as a reciprocal single-stranded crossover between two homologous DNA duplexes (Holliday junction).. In terms of biological role, the RuvA-RuvB-RuvC complex processes Holliday junction (HJ) DNA during genetic recombination and DNA repair. Endonuclease that resolves HJ intermediates. Cleaves cruciform DNA by making single-stranded nicks across the HJ at symmetrical positions within the homologous arms, yielding a 5'-phosphate and a 3'-hydroxyl group; requires a central core of homology in the junction. The consensus cleavage sequence is 5'-(A/T)TT(C/G)-3'. Cleavage occurs on the 3'-side of the TT dinucleotide at the point of strand exchange. HJ branch migration catalyzed by RuvA-RuvB allows RuvC to scan DNA until it finds its consensus sequence, where it cleaves and resolves the cruciform DNA. This chain is Crossover junction endodeoxyribonuclease RuvC, found in Bdellovibrio bacteriovorus (strain ATCC 15356 / DSM 50701 / NCIMB 9529 / HD100).